The following is a 62-amino-acid chain: Photosystem II reaction center protein Z (62 aa).

2 helical membrane passes run 8–28 (ALFALVALSFLLVVGVPVAFA) and 41–61 (FQGVSAWFALVFTVGVLNSLV).

This sequence belongs to the PsbZ family. PSII is composed of 1 copy each of membrane proteins PsbA, PsbB, PsbC, PsbD, PsbE, PsbF, PsbH, PsbI, PsbJ, PsbK, PsbL, PsbM, PsbT, PsbY, PsbZ, Psb30/Ycf12, at least 3 peripheral proteins of the oxygen-evolving complex and a large number of cofactors. It forms dimeric complexes.

The protein resides in the plastid. It is found in the chloroplast thylakoid membrane. Its function is as follows. May control the interaction of photosystem II (PSII) cores with the light-harvesting antenna, regulates electron flow through the 2 photosystem reaction centers. PSII is a light-driven water plastoquinone oxidoreductase, using light energy to abstract electrons from H(2)O, generating a proton gradient subsequently used for ATP formation. This Nephroselmis olivacea (Green alga) protein is Photosystem II reaction center protein Z.